The chain runs to 566 residues: Pentatricopeptide repeat-containing protein At4g11690 (566 aa).

13 PPR repeats span residues 93-127, 128-158, 162-196, 197-231, 232-266, 267-301, 302-336, 337-371, 372-406, 407-441, 442-476, 477-511, and 512-546; these read KFRLYEVIINSYVQSQSLNLSISYFNEMVDNGFVP, GSNCFNYLLTFVVGSSSFNQWWSFFNENKSK, DVYSFGILIKGCCEAGEIEKSFDLLIELTEFGFSP, NVVIYTTLIDGCCKKGEIEKAKDLFFEMGKLGLVA, NERTYTVLINGLFKNGVKKQGFEMYEKMQEDGVFP, NLYTYNCVMNQLCKDGRTKDAFQVFDEMRERGVSC, NIVTYNTLIGGLCREMKLNEANKVVDQMKSDGINP, NLITYNTLIDGFCGVGKLGKALSLCRDLKSRGLSP, SLVTYNILVSGFCRKGDTSGAAKMVKEMEERGIKP, SKVTYTILIDTFARSDNMEKAIQLRLSMEELGLVP, DVHTYSVLIHGFCIKGQMNEASRLFKSMVEKNCEP, NEVIYNTMILGYCKEGSSYRALKLLKEMEEKELAP, and NVASYRYMIEVLCKERKSKEAERLVEKMIDSGIDP.

The protein belongs to the PPR family. P subfamily.

This is Pentatricopeptide repeat-containing protein At4g11690 from Arabidopsis thaliana (Mouse-ear cress).